Reading from the N-terminus, the 450-residue chain is Probable glycine dehydrogenase (decarboxylating) subunit 1 (450 aa).

This sequence belongs to the GcvP family. N-terminal subunit subfamily. In terms of assembly, the glycine cleavage system is composed of four proteins: P, T, L and H. In this organism, the P 'protein' is a heterodimer of two subunits.

The enzyme catalyses N(6)-[(R)-lipoyl]-L-lysyl-[glycine-cleavage complex H protein] + glycine + H(+) = N(6)-[(R)-S(8)-aminomethyldihydrolipoyl]-L-lysyl-[glycine-cleavage complex H protein] + CO2. The glycine cleavage system catalyzes the degradation of glycine. The P protein binds the alpha-amino group of glycine through its pyridoxal phosphate cofactor; CO(2) is released and the remaining methylamine moiety is then transferred to the lipoamide cofactor of the H protein. The protein is Probable glycine dehydrogenase (decarboxylating) subunit 1 of Desulfotalea psychrophila (strain LSv54 / DSM 12343).